The primary structure comprises 25 residues: Hypotensin-2 (25 aa).

The disordered stretch occupies residues 1–25 (AEIDFSGIPEDIIKEIKETNAKPPA). Ser6 bears the Phosphoserine mark. The segment covering 11–25 (DIIKEIKETNAKPPA) has biased composition (basic and acidic residues).

Belongs to the non-disulfide-bridged peptide (NDBP) superfamily. Expressed by the venom gland.

It is found in the secreted. Agonist of the B2 bradykinin receptor (BDKRB2). Potentiates the hypotensive effect of bradykinin (BK) and induces a direct vasorelaxing effect, independently of BK, by endothelium- and nitric oxide (NO)-dependent mechanisms in rat aortic ring preparations. Does not inhibit the angiotensin-converting enzyme (ACE). Also exerts proangiogenic, antiinflammatory, and antifibrogenic activities. Does not inhibit the angiotensin-converting enzyme (ACE) but weakly increases its activity, and weakly inhibits neprilysin (NEP) in a non-competitive manner. Exerts intermediate cytotoxicity and pro-inflammatory effects on mouse macrophages, and increases the phagocytic activity of these murine cells. In terms of biological role, presents weak hemolytic activity at physiological concentrations (micromolar range), and weak lactate dehydrogenase (LDH) release from mast cells. Does not induce mast cell degranulation, and antimicrobial effects. In vivo, causes intense pain (but no edema formation), when injected in mice hind paws. Also induces discomfort and anxiety in mice, as it moderately diminishes locomotion and moderately increases rearing behavior. The chain is Hypotensin-2 from Tityus serrulatus (Brazilian scorpion).